Consider the following 573-residue polypeptide: Urease subunit alpha (573 aa).

His139, His141, and Lys222 together coordinate Ni(2+). N6-carboxylysine is present on Lys222. His224 lines the substrate pocket. 2 residues coordinate Ni(2+): His251 and His277. Catalysis depends on His325, which acts as the Proton donor. Asp365 contacts Ni(2+).

The protein belongs to the metallo-dependent hydrolases superfamily. Urease alpha subunit family. As to quaternary structure, heterotrimer of UreA (gamma), UreB (beta) and UreC (alpha) subunits. Three heterotrimers associate to form the active enzyme. It depends on Ni cation as a cofactor. Carboxylation allows a single lysine to coordinate two nickel ions.

The protein localises to the cytoplasm. The catalysed reaction is urea + 2 H2O + H(+) = hydrogencarbonate + 2 NH4(+). It functions in the pathway nitrogen metabolism; urea degradation; CO(2) and NH(3) from urea (urease route): step 1/1. This is Urease subunit alpha from Flavobacterium johnsoniae (strain ATCC 17061 / DSM 2064 / JCM 8514 / BCRC 14874 / CCUG 350202 / NBRC 14942 / NCIMB 11054 / UW101) (Cytophaga johnsonae).